Here is a 226-residue protein sequence, read N- to C-terminus: Cold-regulated 413 inner membrane protein 2, chloroplastic (226 aa).

The transit peptide at 1–76 (MASLCLSSSR…RKRGSSVVCY (76 aa)) directs the protein to the chloroplast. The Stromal portion of the chain corresponds to 77–79 (ATP). The helical transmembrane segment at 80–100 (MLSVHNLQWISTISCVALMFA) threads the bilayer. Residues 101 to 103 (RGT) are Chloroplast intermembrane-facing. The chain crosses the membrane as a helical span at residues 104-124 (GIHKSFVVPLFALQAPMGIVS). Residues 125–129 (WMKGE) lie on the Stromal side of the membrane. A helical membrane pass occupies residues 130–150 (YGIWAAFLALLTRLFFSFPVE). Residues 151–152 (LE) lie on the Chloroplast intermembrane side of the membrane. The helical transmembrane segment at 153–173 (LPFIALLLVIVAPYQVMSIRG) threads the bilayer. Residues 174-176 (KQE) lie on the Stromal side of the membrane. The helical transmembrane segment at 177-197 (GAILSLAISCFLAFQHFSRAG) threads the bilayer. Residues 198–205 (TLQKAFDQ) are Chloroplast intermembrane-facing. The helical transmembrane segment at 206 to 226 (NSVLATVAIIGVTVVSFLFLI) threads the bilayer.

The protein belongs to the Cold-regulated 413 protein family.

Its subcellular location is the plastid. The protein resides in the chloroplast inner membrane. This is Cold-regulated 413 inner membrane protein 2, chloroplastic (COR413IM2) from Arabidopsis thaliana (Mouse-ear cress).